Here is a 144-residue protein sequence, read N- to C-terminus: Maximins 6/Hv (144 aa).

The first 18 residues, 1–18, serve as a signal peptide directing secretion; that stretch reads MNFKYIVAVSFLIASGYA. A propeptide spanning residues 19 to 43 is cleaved from the precursor; it reads RSEENDVQSLSQREVLEEETLREIR. Residue asparagine 70 is modified to Asparagine amide. Positions 74 to 123 are excised as a propeptide; sequence TAKGHEVMKRLEAVMRDLDSLDHPEEASERETRGFNQEEIANLFTKKEKR. Residue isoleucine 143 is modified to Isoleucine amide.

It belongs to the bombinin family. As to expression, expressed by the skin glands.

The protein resides in the secreted. Functionally, shows antimicrobial activity against bacteria and against the fungus C.albicans. It has little hemolytic activity. Its function is as follows. Shows antimicrobial activity against bacteria and against the fungus C.albicans. Shows strong hemolytic activity. The chain is Maximins 6/Hv from Bombina maxima (Giant fire-bellied toad).